A 459-amino-acid chain; its full sequence is Acetyltransferase pigO (459 aa).

The protein belongs to the trichothecene O-acetyltransferase family.

The protein operates within secondary metabolite biosynthesis. Acetyltransferase; part of the gene cluster that mediates the biosynthesis of azaphilone pigments (MonAzPs), a complex mixture of compounds with a common azaphilone skeleton very widely used as food colorants. PigM and pigO are involved in the elimination of the omega-1 alcohol with pigM acting as an O-acetyltransferase that synthesizes the O-11 acetyl intermediate whereas pigO eliminates acetic acid to yield an intermediate with a C10(11) double bond. The first step of the pathway is performed by the nrPKS pigA that forms the hexaketide precursor from successive condensations of five malonyl-CoA units, with a simple acetyl-CoA starter unit. The role of esterase pigG is not clear, but it may play at most a supplementary role in the formation of the benzaldehyde produced by the pigA nrPKS. This very reactive benzaldehyde is intercepted by the pigC ketoreductase that to provide the first stable enzyme-free MonAzPs intermediate, 6-(4-hydroxy-2-oxopentyl)-3-methyl-2,4-dioxocyclohexane carbaldehyde, also known as M7PKS-1. The FAD-dependent monooxygenase pigN hydroxylates M7PKS-1 at C-4, which triggers the formation of the pyran ring. PigJ, pigK and pigD are involved in the acetylation of the pyran ring. PigJ and pigK form the two subunits of a dedicated fungal FAS that produces the side chain fatty acyl moiety of MonAzPs and pigD transfers the fatty acyl chain to the C-4 alcohol. PigM and pigO are involved in the elimination of the omega-1 alcohol. PigM acts as an O-acetyltransferase that synthesizes the putative O-11 acetyl intermediate whereas pigO eliminates acetic acid to yield an intermediate with a C10(11) double bond. The dehydration of the C-11 alcohol followed by the reduction of the C6(7) double bond by the NAD(P)H-dependent oxidoreductase pigE increases the electrophilicity of the C-5 ketone of the resulting acyl benzopyran. This in turn sets up the C-5 ketone for an intramolecular Knoevenagel aldol condensation with the C-20 enol of the side chain. This condensation affords the characteristic linear tricyclic carbon skeletons of the yellow pigments that serve as the common precursors for the classical yellow pigments monascin and ankaflavin, orange pigments rubopunctatin and monascorubrin, and red pigments ribropunctamine and monascorubramine. The FAD-dependent oxidoreductase pigF is especially invoved in the biosynthesis of orange and red pigments via desaturation of C6(7). The sequence is that of Acetyltransferase pigO from Monascus ruber (Mold).